Here is a 136-residue protein sequence, read N- to C-terminus: ATP synthase epsilon chain (136 aa).

The interval 88–136 (DASSAESDLQAARNEVSKMEGQPASADKVKAQQSLDRARARVQAAKNQD) is disordered.

The protein belongs to the ATPase epsilon chain family. As to quaternary structure, F-type ATPases have 2 components, CF(1) - the catalytic core - and CF(0) - the membrane proton channel. CF(1) has five subunits: alpha(3), beta(3), gamma(1), delta(1), epsilon(1). CF(0) has three main subunits: a, b and c.

The protein localises to the cellular thylakoid membrane. Functionally, produces ATP from ADP in the presence of a proton gradient across the membrane. This Synechococcus sp. (strain WH7803) protein is ATP synthase epsilon chain.